The chain runs to 252 residues: Mannose-P-dolichol utilization defect 1 protein homolog (252 aa).

One can recognise a PQ-loop 1 domain in the interval 34–100 (KALLSKGLGL…HGYPFSAWGD (67 aa)). Transmembrane regions (helical) follow at residues 41–61 (LGLAIIAGSVLVKVPQVLKIL), 69–89 (INIVGVVLDLLAISFHLSYNF), 98–118 (WGDSTFLAIQTVTIAVLVLFF), 126–146 (GLFLVGYVVLMYVLNSGLTPM), 148–168 (VLFTIQSCNIPILLVGKLSQA), 180–200 (LSAATVIMMFAGSVARIFTSI), and 207–227 (MIILTFIASTFANSVILGQLI). Residues 157-211 (IPILLVGKLSQAYTNYQAGSTGQLSAATVIMMFAGSVARIFTSIQETGDFMIILT) form the PQ-loop 2 domain.

It belongs to the MPDU1 (TC 2.A.43.3) family.

The protein localises to the membrane. The chain is Mannose-P-dolichol utilization defect 1 protein homolog from Drosophila melanogaster (Fruit fly).